The primary structure comprises 509 residues: Probable aspartic-type endopeptidase CTSD (509 aa).

Positions 1 to 21 (MQFLWLCLLSAVTLQFTGTLA) are cleaved as a signal peptide. In terms of domain architecture, Peptidase A1 spans 102–408 (YFSEVKVGSE…DFDKNRVGLA (307 aa)). D120 is an active-site residue. N174 carries N-linked (GlcNAc...) asparagine glycosylation. D302 is a catalytic residue. N361 is a glycosylation site (N-linked (GlcNAc...) asparagine). The disordered stretch occupies residues 451 to 489 (NKAPSGGSPGLPAESGSDSTTNGEATNGATSSPNSSSSV). Positions 466-480 (GSDSTTNGEATNGAT) are enriched in polar residues. An N-linked (GlcNAc...) asparagine glycan is attached at N484. S485 carries the GPI-anchor amidated serine lipid modification. The propeptide at 486–509 (SSSVLTPTWLTLAVFFAIGSSLWS) is removed in mature form.

The protein belongs to the peptidase A1 family.

The protein resides in the cell membrane. Functionally, probable GPI-anchored aspartic-type endopeptidase which contributes to virulence. The polypeptide is Probable aspartic-type endopeptidase CTSD (CTSD) (Arthroderma benhamiae (strain ATCC MYA-4681 / CBS 112371) (Trichophyton mentagrophytes)).